The chain runs to 395 residues: Protein maternal effect lethal 26 (395 aa).

The region spanning 41 to 162 is the MATH domain; the sequence is KVQHTWTVKN…RDMIIVNVEI (122 aa). The BTB domain occupies 201–269; the sequence is CDFAINVNGK…IYCGRCNKDI (69 aa).

In terms of assembly, interacts (via BTB domain) with cul-3. Seems to be a component of a E3 ubiquitin-protein ligase complex containing cul-3. Interacts (probably via MATH domain) with mei-1, which targets mei-1 for ubiquitin-mediated proteolysis. Interacts (probably via MATH domain) with ppfr-1, the regulatory subunit of the PP4 complex; targets ppfr-1 for ubiquitin-mediated proteolysis. May interact (via MATH domain) with unc-89 (via Ig-like C2-type domain 2/3 and, Ig-like C2-type domain 50 and fibronectin type-III domain 2). Expressed in body wall muscles.

Its subcellular location is the cytoplasm. It is found in the myofibril. The protein resides in the sarcomere. The protein localises to the m line. It localises to the i band. It participates in protein modification; protein ubiquitination. Probable substrate-specific adapter of an E3 ubiquitin-protein ligase complex which mediates the ubiquitination and subsequent proteasomal degradation of target proteins. Controls degradation of microtubule severing protein mei-1 after meiosis. Controls degradation of ppfr-1, the regulatory subunit of PP4 complex, after meiosis. In body wall muscles, involved in the organization of myosin thick filaments, likely by regulating the degradation of mei-1 downstream of unc-89. May also activate the TORC1 pathway. This chain is Protein maternal effect lethal 26 (mel-26), found in Caenorhabditis elegans.